Here is a 142-residue protein sequence, read N- to C-terminus: Large ribosomal subunit protein uL11 (142 aa).

The protein belongs to the universal ribosomal protein uL11 family. As to quaternary structure, part of the ribosomal stalk of the 50S ribosomal subunit. Interacts with L10 and the large rRNA to form the base of the stalk. L10 forms an elongated spine to which L12 dimers bind in a sequential fashion forming a multimeric L10(L12)X complex. In terms of processing, one or more lysine residues are methylated.

Its function is as follows. Forms part of the ribosomal stalk which helps the ribosome interact with GTP-bound translation factors. The protein is Large ribosomal subunit protein uL11 of Vesicomyosocius okutanii subsp. Calyptogena okutanii (strain HA).